The chain runs to 560 residues: Leiomodin-3 (560 aa).

Positions 1–49 (MSEHSRNSDQEELLDEEINEDEILANLSAEELKELQSEMEVMAPDPSLP) are interaction with tropomyosin alpha. Residues 16–42 (EEINEDEILANLSAEELKELQSEMEVM) adopt a coiled-coil conformation. 2 disordered regions span residues 45–68 (DPSL…NFNH) and 127–217 (IVAN…SKLD). A compositionally biased stretch (acidic residues) spans 142–167 (ETDEEDEEEEDDDDDDEGEDDGEESE). Over residues 168-182 (ETNREEEGKAKEQIR) the composition is skewed to basic and acidic residues. Residues 183-192 (NCENNCQQVT) are compositionally biased toward polar residues. Residues 194 to 217 (KAFKEQRDRPEAQEQSEKKISKLD) are compositionally biased toward basic and acidic residues. A coiled-coil region spans residues 386 to 425 (VTNLLTRNQDKQRQKRQEEQKQQQLKEQKKLIAMLENGLG). Disordered stretches follow at residues 437 to 480 (PKPD…KYRT) and 494 to 530 (QRKS…PPLV). Positions 448-458 (QPPPPRPPNPQ) are enriched in pro residues. Residues 498–516 (RMPEAREPPEKTNLKDVIK) show a composition bias toward basic and acidic residues. A WH2 domain is found at 534–553 (PRDQLLNDIRHSSVAYLKPV).

Belongs to the tropomodulin family. As to quaternary structure, may interact with tropomyosin alpha (TPM1/2) N-terminus. Interacts with KLHL40; leading to stabilization. Ubiquitinated, leading to its degradation. Interaction with KLHL40 negatively regulates ubiquitination and degradation. In terms of tissue distribution, expressed in cardiac and at higher levels in skeletal muscles (at protein level).

Its subcellular location is the cytoplasm. The protein localises to the myofibril. The protein resides in the sarcomere. It is found in the m line. It localises to the a band. Its subcellular location is the cytoskeleton. Functionally, essential for the organization of sarcomeric actin thin filaments in skeletal muscle. Increases the rate of actin polymerization. In Homo sapiens (Human), this protein is Leiomodin-3 (LMOD3).